The following is a 294-amino-acid chain: Tetraspanin-15 (294 aa).

Residues 1 to 23 (MPRGDSEQVRYCARFSYLWLKFS) lie on the Cytoplasmic side of the membrane. A helical membrane pass occupies residues 24–44 (LIIYSTVFWLIGALVLSVGIY). The Extracellular segment spans residues 45–62 (AEVERQKYKTLESAFLAP). A helical membrane pass occupies residues 63–83 (AIILILLGVVMFMVSFIGVLA). Residues 84–93 (SLRDNLYLLQ) lie on the Cytoplasmic side of the membrane. The helical transmembrane segment at 94–114 (AFMYILGICLIMELIGGVVAL) threads the bilayer. The Extracellular portion of the chain corresponds to 115 to 235 (TFRNQTIDFL…WFMDNYTIMA (121 aa)). An N-linked (GlcNAc...) asparagine glycan is attached at Asn-118. 4 cysteine pairs are disulfide-bonded: Cys-154/Cys-219, Cys-155/Cys-185, Cys-171/Cys-179, and Cys-186/Cys-198. N-linked (GlcNAc...) asparagine glycosylation is found at Asn-189 and Asn-230. The chain crosses the membrane as a helical span at residues 236-256 (GILLGILLPQFLGVLLTLLYI). Residues 257-294 (TRVEDIIMEHSVTDGLLGPGAKPSVEAAGTGCCLCYPN) lie on the Cytoplasmic side of the membrane.

Belongs to the tetraspanin (TM4SF) family. In terms of assembly, interacts with ADAM10; the interaction influences ADAM10 substrate specificity, endocytosis and turnover. Palmitoylated.

Its subcellular location is the cell membrane. The protein localises to the late endosome membrane. In terms of biological role, part of TspanC8 subgroup, composed of 6 members that interact with the transmembrane metalloprotease ADAM10. This interaction is required for ADAM10 exit from the endoplasmic reticulum and for enzymatic maturation and trafficking to the cell surface as well as substrate specificity. Different TspanC8/ADAM10 complexes have distinct substrates. Promotes ADAM10-mediated cleavage of CDH2. Negatively regulates ligand-induced Notch activity probably by regulating ADAM10 activity. The polypeptide is Tetraspanin-15 (Homo sapiens (Human)).